A 202-amino-acid chain; its full sequence is ATP-dependent Clp protease proteolytic subunit 2 (202 aa).

Residue Ser-99 is the Nucleophile of the active site. His-124 is a catalytic residue.

Belongs to the peptidase S14 family. In terms of assembly, fourteen ClpP subunits assemble into 2 heptameric rings which stack back to back to give a disk-like structure with a central cavity, resembling the structure of eukaryotic proteasomes.

The protein localises to the cytoplasm. The enzyme catalyses Hydrolysis of proteins to small peptides in the presence of ATP and magnesium. alpha-casein is the usual test substrate. In the absence of ATP, only oligopeptides shorter than five residues are hydrolyzed (such as succinyl-Leu-Tyr-|-NHMec, and Leu-Tyr-Leu-|-Tyr-Trp, in which cleavage of the -Tyr-|-Leu- and -Tyr-|-Trp bonds also occurs).. Functionally, cleaves peptides in various proteins in a process that requires ATP hydrolysis. Has a chymotrypsin-like activity. Plays a major role in the degradation of misfolded proteins. The protein is ATP-dependent Clp protease proteolytic subunit 2 of Desulfitobacterium hafniense (strain Y51).